We begin with the raw amino-acid sequence, 206 residues long: Large ribosomal subunit protein mL62 (206 aa).

The transit peptide at 1-29 directs the protein to the mitochondrion; sequence MATAWGLRWGLSRTGTLLLAPPARCARRA. Glutamine 90 is subject to N5-methylglutamine.

The protein belongs to the prokaryotic/mitochondrial release factor family. Mitochondrion-specific ribosomal protein mL62 subfamily. Component of the mitochondrial ribosome large subunit (39S) which comprises a 16S rRNA and about 50 distinct proteins. Methylation of glutamine in the GGQ triplet by HEMK1.

The protein resides in the mitochondrion. The enzyme catalyses an N-acyl-L-alpha-aminoacyl-tRNA + H2O = an N-acyl-L-amino acid + a tRNA + H(+). Essential peptidyl-tRNA hydrolase component of the mitochondrial large ribosomal subunit. Acts as a codon-independent translation release factor that has lost all stop codon specificity and directs the termination of translation in mitochondrion, possibly in case of abortive elongation. May be involved in the hydrolysis of peptidyl-tRNAs that have been prematurely terminated and thus in the recycling of stalled mitochondrial ribosomes. In Mus musculus (Mouse), this protein is Large ribosomal subunit protein mL62.